Consider the following 4660-residue polypeptide: Low-density lipoprotein receptor-related protein 2 (4660 aa).

An N-terminal signal peptide occupies residues 1-25; the sequence is MERGAAAAAWMLLLAIAACLEPVSS. The Extracellular segment spans residues 26 to 4425; that stretch reads QECGSGNFRC…LSRGIPPGTT (4400 aa). 6 consecutive LDL-receptor class A domains span residues 27–63, 66–104, 107–143, 141–180, 182–218, and 221–257; these read ECGSGNFRCDNGYCIPASWRCDGTRDCLDDTDEIGCP, SCESGLFLCPAEGTCIPSSWVCDEDKDCSDGADEQQNCA, TCSAQQMTCSNGQCIPSEYRCDHVSDCPDGSDERNCH, NCHYPTCDQLTCANGACYNTSQRCDQKVDCRDSSDEANCT, LCSQKEFECGSGECILRAYVCDHDNDCEDNSDERNCN, and TCGGHQFTCSNGQCINQNWVCDGDDDCQDSGDEDGCE. Intrachain disulfides connect cysteine 28/cysteine 40, cysteine 35/cysteine 53, cysteine 47/cysteine 62, cysteine 67/cysteine 80, cysteine 74/cysteine 93, cysteine 87/cysteine 103, cysteine 108/cysteine 120, cysteine 115/cysteine 133, cysteine 127/cysteine 142, cysteine 142/cysteine 157, cysteine 152/cysteine 170, cysteine 164/cysteine 179, cysteine 183/cysteine 195, cysteine 190/cysteine 208, cysteine 202/cysteine 217, cysteine 222/cysteine 234, cysteine 229/cysteine 247, and cysteine 241/cysteine 256. N-linked (GlcNAc...) asparagine glycans are attached at residues asparagine 159 and asparagine 178. Asparagine 259 carries an N-linked (GlcNAc...) asparagine glycan. The 44-residue stretch at 264-307 folds into the LDL-receptor class A 7 domain; that stretch reads RCYPREWACPGSGRCISIDKVCDGVPDCPEGDDENNVTSGRTCG. Cystine bridges form between cysteine 265/cysteine 278, cysteine 272/cysteine 291, and cysteine 285/cysteine 306. N-linked (GlcNAc...) asparagine glycans are attached at residues asparagine 299 and asparagine 340. The EGF-like 1; calcium-binding domain occupies 347–382; sequence DFDDCQIWGICDQKCENRQGRHQCLCEEGYILERGQ. 2 disulfides stabilise this stretch: cysteine 351–cysteine 361 and cysteine 357–cysteine 370. LDL-receptor class B repeat units lie at residues 435-477, 478-520, 521-567, and 568-612; these read HRVF…DWIN, NKLY…DPTV, GYLF…DLVS, and KRVY…FEEH. Residue asparagine 462 is glycosylated (N-linked (GlcNAc...) asparagine). Asparagine 657 carries an N-linked (GlcNAc...) asparagine glycan. LDL-receptor class B repeat units follow at residues 752 to 794, 795 to 836, 837 to 880, and 881 to 924; these read STVF…DWIS, RNLY…HPTA, GYMF…DWSA, and SRLY…FKDN. N-linked (GlcNAc...) asparagine glycosylation is present at asparagine 865. The 37-residue stretch at 1024–1060 folds into the LDL-receptor class A 8 domain; that stretch reads QCGSLSFPCNNGKCVPSFFRCDGVDDCHDNSDEHQCG. Intrachain disulfides connect cysteine 1025/cysteine 1037, cysteine 1032/cysteine 1050, and cysteine 1044/cysteine 1059. Asparagine 1063 carries N-linked (GlcNAc...) asparagine glycosylation. LDL-receptor class A domains lie at 1065 to 1102, 1109 to 1145, 1149 to 1185, 1187 to 1224, 1230 to 1268, 1271 to 1307, and 1312 to 1350; these read TCSPSAFACVRGGQCIPGQWHCDRQNDCLDGSDEQNCP, TCPSTSFTCDNHVCIPKDWVCDTDNDCSDGSDEKNCQ, TCQPTQFRCPDHRCISPLYVCDGDKDCADGSDEAGCV, NCTSAQFKCADGSSCINSRYRCDGVYDCRDNSDEAGCP, MCHPDEFQCQGDGTCIPNTWECDGHPDCIHGSDEHTGCV, TCSPTHFLCDNGNCIYKAWICDGDNDCRDMSDEKDCP, and HCPSTQWQCPGYSTCINLSALCDGVFDCPNGTDESPLCN. Cystine bridges form between cysteine 1066–cysteine 1079, cysteine 1073–cysteine 1092, cysteine 1086–cysteine 1101, cysteine 1110–cysteine 1122, cysteine 1117–cysteine 1135, cysteine 1129–cysteine 1144, cysteine 1150–cysteine 1162, cysteine 1157–cysteine 1175, and cysteine 1169–cysteine 1184. Residues tryptophan 1127, aspartate 1130, aspartate 1132, aspartate 1134, aspartate 1140, and glutamate 1141 each coordinate Ca(2+). Asparagine 1187 carries an N-linked (GlcNAc...) asparagine glycan. Disulfide bonds link cysteine 1188/cysteine 1201, cysteine 1195/cysteine 1214, cysteine 1208/cysteine 1223, cysteine 1231/cysteine 1244, cysteine 1238/cysteine 1257, cysteine 1251/cysteine 1267, cysteine 1272/cysteine 1284, cysteine 1279/cysteine 1297, cysteine 1291/cysteine 1306, cysteine 1313/cysteine 1326, cysteine 1320/cysteine 1339, cysteine 1333/cysteine 1349, cysteine 1354/cysteine 1365, cysteine 1361/cysteine 1374, cysteine 1376/cysteine 1389, cysteine 1395/cysteine 1405, cysteine 1401/cysteine 1414, and cysteine 1416/cysteine 1429. Positions 1206, 1209, 1211, 1213, 1219, and 1220 each coordinate Ca(2+). Asparagine 1328 and asparagine 1341 each carry an N-linked (GlcNAc...) asparagine glycan. The region spanning 1350–1390 is the EGF-like 2 domain; the sequence is NQDSCSHFNGGCTHQCMQGPFGATCLCPLGYQLANDTKTCE. Asparagine 1384 carries N-linked (GlcNAc...) asparagine glycosylation. Positions 1391 to 1430 constitute an EGF-like 3; calcium-binding domain; the sequence is DINECDIPGFCSQHCVNMRGSFRCACDPEYTLESDGRTCK. N-linked (GlcNAc...) asparagine glycosylation is found at asparagine 1451, asparagine 1497, and asparagine 1551. 5 LDL-receptor class B repeats span residues 1479 to 1521, 1522 to 1564, 1567 to 1610, 1611 to 1655, and 1656 to 1696; these read GRVF…DWIG, RNLY…DPRM, NVMF…DYPN, RLIY…FEDF, and VYWT…IHPS. N-linked (GlcNAc...) asparagine glycosylation is found at asparagine 1676, asparagine 1733, and asparagine 1811. LDL-receptor class B repeat units follow at residues 1791-1833, 1834-1883, 1884-1931, 1932-1973, 1974-2014, 2108-2157, 2158-2202, 2203-2246, and 2247-2290; these read QFIY…DWVS, RNIY…DPAR, GKLY…DIQE, QKLY…YGSF, LYYS…YHRR, GFIY…DWAA, GNLY…DPKH, RYLF…DHDT, and GYIY…FGES. Asparagine 2134, asparagine 2178, and asparagine 2225 each carry an N-linked (GlcNAc...) asparagine glycan. An N-linked (GlcNAc...) asparagine glycan is attached at asparagine 2396. 5 LDL-receptor class B repeats span residues 2432-2478, 2479-2519, 2520-2563, 2564-2605, and 2606-2647; these read NRIF…DWIN, RRIY…DPCR, GYMY…DLET, DLLY…YGQY, and IYWT…VVKT. N-linked (GlcNAc...) asparagine glycosylation is found at asparagine 2488 and asparagine 2548. LDL-receptor class A domains follow at residues 2700-2738, 2741-2777, 2780-2819, 2822-2861, 2864-2902, 2907-2946, 2949-2991, 2994-3030, 3033-3071, and 3076-3112; these read RCNQLQFTCLNGHCINQDWKCDNDNDCGDGSDELPTVCA, TCRSTAFTCGNGRCVPYHYRCDYYNDCGDNSDEAGCL, NCNSTTEFTCSNGRCIPLSYVCNGINNCHDNDTSDEKNCP, TCPPDFTKCQTTNICVPRAFLCDGDNDCGDGSDENPIYCA, TCRSNEFQCLSPQRCIPSYWFCDGEADCADGSDEPDTCG, TCRASQFQCDNGRCISGNWVCDGDNDCGDMSDEDQRHHCE, NCSS…QNCT, TCSAGEFSCANGRCVRQSFRCDRRNDCGDYSDERGCS, PCHANQFTCQNGRCIPRFFVCDEDNDCGDGSDEQEHLCH, and TCPLHQFRCDNGHCIEMGRVCNHVDDCSDNSDEKGCG. Intrachain disulfides connect cysteine 2701–cysteine 2713, cysteine 2708–cysteine 2726, cysteine 2720–cysteine 2737, cysteine 2742–cysteine 2754, cysteine 2749–cysteine 2767, cysteine 2761–cysteine 2776, cysteine 2781–cysteine 2794, cysteine 2789–cysteine 2807, cysteine 2801–cysteine 2818, cysteine 2823–cysteine 2836, cysteine 2830–cysteine 2849, cysteine 2843–cysteine 2860, cysteine 2865–cysteine 2878, cysteine 2872–cysteine 2891, cysteine 2885–cysteine 2901, cysteine 2908–cysteine 2920, cysteine 2915–cysteine 2933, and cysteine 2927–cysteine 2945. N-linked (GlcNAc...) asparagine glycosylation is present at asparagine 2782. The N-linked (GlcNAc...) asparagine glycan is linked to asparagine 2810. An N-linked (GlcNAc...) asparagine glycan is attached at asparagine 2949. 18 disulfides stabilise this stretch: cysteine 2950/cysteine 2967, cysteine 2957/cysteine 2980, cysteine 2974/cysteine 2990, cysteine 2995/cysteine 3007, cysteine 3002/cysteine 3020, cysteine 3014/cysteine 3029, cysteine 3034/cysteine 3046, cysteine 3041/cysteine 3059, cysteine 3053/cysteine 3070, cysteine 3077/cysteine 3089, cysteine 3084/cysteine 3102, cysteine 3096/cysteine 3111, cysteine 3116/cysteine 3128, cysteine 3124/cysteine 3137, cysteine 3139/cysteine 3152, cysteine 3158/cysteine 3169, cysteine 3165/cysteine 3178, and cysteine 3180/cysteine 3193. Residue asparagine 2989 is glycosylated (N-linked (GlcNAc...) asparagine). Positions 3112 to 3153 constitute an EGF-like 4 domain; that stretch reads GINECLDSSISRCDHNCTDTITSFYCSCLPGYKLMSDKRSCV. N-linked (GlcNAc...) asparagine glycosylation is present at asparagine 3127. The region spanning 3154–3194 is the EGF-like 5; calcium-binding domain; the sequence is DIDECKESPQLCSQKCENVVGSYICKCAPGYIREPDGKSCR. Residues asparagine 3213, asparagine 3259, asparagine 3317, and asparagine 3357 are each glycosylated (N-linked (GlcNAc...) asparagine). LDL-receptor class B repeat units follow at residues 3241 to 3283, 3284 to 3326, 3335 to 3378, 3379 to 3421, and 3422 to 3462; these read KRLY…DWVS, RKLY…EHPR, GHVY…DYTN, DLLY…FEDT, and VFWT…YHPY. Asparagine 3448 is a glycosylation site (N-linked (GlcNAc...) asparagine). LDL-receptor class A domains follow at residues 3513-3551, 3554-3592, 3595-3633, 3636-3674, 3679-3717, 3720-3757, 3760-3796, and 3799-3835; these read MCSSTQFLCGNNEKCIPIWWKCDGQKDCSDGSDEPDLCP, FCRLGQFQCRDGNCTSPQALCNARQDCADGSDEDRVLCE, RCESNEWQCANKRCIPQSWQCDSVNDCLDNSDEDTSHCA, TCRPGQFKCNNGRCIPQSWKCDVDNDCGDYSDEPIDECT, NCDNHTEFSCKTNYRCIPQWAVCNGFDDCRDNSDEQGCE, PCHPSGDFRCANHHCIPLRWKCDGTDDCGDNSDEENCV, ECSESEFRCADQQCIPSRWVCDQENDCGDNSDERDCE, and TCHPEHFQCTSGHCVPKALACDGRADCLDASDESACP. Disulfide bonds link cysteine 3514–cysteine 3527, cysteine 3521–cysteine 3540, cysteine 3534–cysteine 3550, cysteine 3555–cysteine 3567, cysteine 3562–cysteine 3580, cysteine 3574–cysteine 3591, cysteine 3596–cysteine 3608, cysteine 3603–cysteine 3621, cysteine 3615–cysteine 3632, cysteine 3637–cysteine 3649, cysteine 3644–cysteine 3662, cysteine 3656–cysteine 3673, cysteine 3680–cysteine 3694, cysteine 3688–cysteine 3707, cysteine 3701–cysteine 3716, cysteine 3721–cysteine 3734, cysteine 3729–cysteine 3747, cysteine 3741–cysteine 3756, cysteine 3761–cysteine 3773, cysteine 3768–cysteine 3786, cysteine 3780–cysteine 3795, cysteine 3800–cysteine 3812, cysteine 3807–cysteine 3825, and cysteine 3819–cysteine 3834. An N-linked (GlcNAc...) asparagine glycan is attached at asparagine 3566. An N-linked (GlcNAc...) asparagine glycan is attached at asparagine 3682. An N-linked (GlcNAc...) asparagine glycan is attached at asparagine 3840. LDL-receptor class A domains follow at residues 3843–3881, 3884–3923, and 3929–3965; these read YCPAAMFECKNHVCIQSFWICDGENDCVDGSDEEIHLCF, PCESPQRFRCDNSRCVYGHQLCNGVDDCGDGSDEKEEHCR, and PCTDTEYKCSNGNCISQHYVCDNVNDCGDLSDETGCN. Intrachain disulfides connect cysteine 3844–cysteine 3856, cysteine 3851–cysteine 3869, cysteine 3863–cysteine 3880, cysteine 3885–cysteine 3898, cysteine 3893–cysteine 3911, cysteine 3905–cysteine 3922, cysteine 3930–cysteine 3942, cysteine 3937–cysteine 3955, and cysteine 3949–cysteine 3964. Positions 3968 to 4003 constitute an EGF-like 6 domain; sequence DNRTCAENICEQNCTQLSSGGFICSCRPGFKPSTSD. N-linked (GlcNAc...) asparagine glycosylation is found at asparagine 3969 and asparagine 3980. 5 disulfide bridges follow: cysteine 3972–cysteine 3981, cysteine 3977–cysteine 3991, cysteine 4013–cysteine 4023, cysteine 4019–cysteine 4032, and cysteine 4034–cysteine 4049. The region spanning 4009–4050 is the EGF-like 7; calcium-binding domain; it reads DINECEEFGICPQSCRNSKGSYECFCVDGFKSMSTHYGERCA. Asparagine 4070 carries an N-linked (GlcNAc...) asparagine glycan. 3 LDL-receptor class B repeats span residues 4156–4198, 4199–4242, and 4244–4285; these read RHIY…NPKL, GLMF…DYLN, and DRVY…FEDK. An N-linked (GlcNAc...) asparagine glycan is attached at asparagine 4329. Residues 4379–4413 form the EGF-like 8 domain; that stretch reads MPPPCRCMHGGNCYFDENELPKCKCSSGYSGEYCE. Cystine bridges form between cysteine 4383-cysteine 4391, cysteine 4385-cysteine 4401, and cysteine 4403-cysteine 4412. The helical transmembrane segment at 4426–4446 threads the bilayer; that stretch reads MAVLLTFVIVIIVGALVLVGL. Residues 4447 to 4660 lie on the Cytoplasmic side of the membrane; that stretch reads FHYRKTGSLL…ANLVKEDSDV (214 aa). An SH3-binding motif is present at residues 4454 to 4463; it reads SLLPTLPKLP. A PxLPxI/L motif 1; mediates interaction with ANKRA2 motif is present at residues 4457–4462; the sequence is PTLPKL. The PxLPxI/L motif 2; mediates interaction with ANKRA2 signature appears at 4460–4465; that stretch reads PKLPSL. A phosphoserine mark is found at serine 4464 and serine 4467. An Endocytosis signal motif is present at residues 4522 to 4527; that stretch reads FENPMY. Residues 4559 to 4582 are disordered; sequence NYGRPIDPSEIVPEPKPASPGADE. Serine 4577 is subject to Phosphoserine. Positions 4597-4610 are interaction with DAB2; it reads QTTNFENPIYAEMD. An NPXY motif motif is present at residues 4603–4606; sequence NPIY. An SH2-binding motif is present at residues 4606 to 4609; the sequence is YAEM. Residues 4617 to 4660 form a disordered region; sequence VAVAPPPSPSLPAKASKRNLTPGYTATEDTFKDTANLVKEDSDV. The SH3-binding motif lies at 4619–4630; the sequence is VAPPPSPSLPAK. Phosphoserine is present on serine 4624. A compositionally biased stretch (polar residues) spans 4634 to 4644; sequence RNLTPGYTATE. A Phosphothreonine modification is found at threonine 4637. Serine 4658 is modified (phosphoserine).

Belongs to the LDLR family. Binds plasminogen, extracellular matrix components, plasminogen activator-plasminogen activator inhibitor type I complex, apolipoprotein E-enriched beta-VLDL, lipoprotein lipase, lactoferrin, CLU/clusterin and calcium. Forms a multimeric complex together with LRPAP1. Interacts (via PxLPxI/L motif) with ANKRA2 (via ankyrin repeats). Interacts with LRP2BP. Interacts (via NPXY motif) with DAB2; the interaction is not affected by tyrosine phosphorylation of the NPXY motif. Interacts with MB. Interacts with BMP4. Interacts with the Sonic hedgehog protein N-product which is the active product of SHH. Interacts with CST3 in a calcium-dependent manner. Interacts with the vitamin-D binding protein GC/DBP. Interacts with sex hormone-binding protein SHBG. Interacts with angiotensin-2. Also interacts with angiotensin 1-7. Interacts with APOM. Interacts with selenoprotein SEPP1. Interacts with LEP. Interacts with ALB. Interacts with the antiapoptotic protein BIRC5/survivin. Interacts with matrix metalloproteinase MMP2 in complex with metalloproteinase inhibitor TIMP1. In neurons, forms a trimeric complex with APP and APPB1/FE65. Interacts with LDLRAP1/ARH; mediates trafficking of LRP2 to the endocytic recycling compartment. Does not interact with beta-amyloid protein 40 alone but interacts with the complex composed of beta-amyloid protein 40 and CLU/APOJ. Interacts with MDK. Post-translationally, a fraction undergoes proteolytic cleavage of the extracellular domain at the cell membrane to generate a cytoplasmic tail fragment. This is internalized into the early endosome from where it trafficks in an LDLRAP1/ARH-dependent manner to the endocytic recycling compartment (ERC). In the ERC, it is further cleaved by gamma-secretase to release a fragment which translocates to the nucleus and mediates transcriptional repression. In terms of processing, N-glycosylation is required for ligand binding. In the inner ear, expressed in the lumen of the endolymphatic sac where it localizes to macrophage-like cells as well as to mitochondria-rich and ribosome-rich epithelial cells (at protein level). In the inner ear, expressed in marginal cells of the stria vascularis, epithelial cells at the spiral prominence, epithelial cells of Reissner's membrane facing the cochlear duct, and Kolliker's organ (at protein level). Expressed in the choroid plexus epithelium in the brain (at protein level). In the brain, also expressed in astrocytes (at protein level). Expression also detected in epithelial cells of the kidney glomerulus and proximal tubule, lung, epididymis and yolk sac.

Its subcellular location is the apical cell membrane. The protein resides in the endosome lumen. The protein localises to the membrane. It localises to the clathrin-coated pit. It is found in the cell projection. Its subcellular location is the dendrite. The protein resides in the axon. Functionally, multiligand endocytic receptor. Acts together with CUBN to mediate endocytosis of high-density lipoproteins. Mediates receptor-mediated uptake of polybasic drugs such as aprotinin, aminoglycosides and polymyxin B. In the kidney, mediates the tubular uptake and clearance of leptin. Also mediates transport of leptin across the blood-brain barrier through endocytosis at the choroid plexus epithelium. Endocytosis of leptin in neuronal cells is required for hypothalamic leptin signaling and leptin-mediated regulation of feeding and body weight. Mediates endocytosis and subsequent lysosomal degradation of CST3 in kidney proximal tubule cells. Mediates renal uptake of 25-hydroxyvitamin D3 in complex with the vitamin D3 transporter GC/DBP. Mediates renal uptake of metallothionein-bound heavy metals. Together with CUBN, mediates renal reabsorption of myoglobin. Mediates renal uptake and subsequent lysosomal degradation of APOM. Plays a role in kidney selenium homeostasis by mediating renal endocytosis of selenoprotein SEPP1. Mediates renal uptake of the antiapoptotic protein BIRC5/survivin which may be important for functional integrity of the kidney. Mediates renal uptake of matrix metalloproteinase MMP2 in complex with metalloproteinase inhibitor TIMP1. Mediates endocytosis of Sonic hedgehog protein N-product (ShhN), the active product of SHH. Also mediates ShhN transcytosis. In the embryonic neuroepithelium, mediates endocytic uptake and degradation of BMP4, is required for correct SHH localization in the ventral neural tube and plays a role in patterning of the ventral telencephalon. Required at the onset of neurulation to sequester SHH on the apical surface of neuroepithelial cells of the rostral diencephalon ventral midline and to control PTCH1-dependent uptake and intracellular trafficking of SHH. During neurulation, required in neuroepithelial cells for uptake of folate bound to the folate receptor FOLR1 which is necessary for neural tube closure. In the adult brain, negatively regulates BMP signaling in the subependymal zone which enables neurogenesis to proceed. In astrocytes, mediates endocytosis of ALB which is required for the synthesis of the neurotrophic factor oleic acid. Involved in neurite branching. During optic nerve development, required for SHH-mediated migration and proliferation of oligodendrocyte precursor cells. Mediates endocytic uptake and clearance of SHH in the retinal margin which protects retinal progenitor cells from mitogenic stimuli and keeps them quiescent. Plays a role in reproductive organ development by mediating uptake in reproductive tissues of androgen and estrogen bound to the sex hormone binding protein SHBG. Mediates endocytosis of angiotensin-2. Also mediates endocytosis of angiotensin 1-7. Binds to the complex composed of beta-amyloid protein 40 and CLU/APOJ and mediates its endocytosis and lysosomal degradation. Required for embryonic heart development. Required for normal hearing, possibly through interaction with estrogen in the inner ear. This Rattus norvegicus (Rat) protein is Low-density lipoprotein receptor-related protein 2 (Lrp2).